Consider the following 662-residue polypeptide: Probable quinol oxidase subunit 1 (662 aa).

The next 2 helical transmembrane spans lie at 14-34 (WMIT…IAVI) and 58-78 (IMYL…ALLI). H102 lines the Fe(II)-heme a pocket. 8 consecutive transmembrane segments (helical) span residues 103-123 (GVIM…NIVV), 140-160 (VSFW…IIGG), 187-207 (IAIQ…FVTI), 228-248 (FITT…LALM), 273-293 (FFWV…FGIY), 311-331 (MVWA…HHFF), 336-356 (GALI…PTGV), and 376-396 (MLFS…GVML). Cu cation contacts are provided by H279, Y283, H328, and H329. A cross-link (1'-histidyl-3'-tyrosine (His-Tyr)) is located at residues 279–283 (HPEVY). H414 contributes to the heme a3 binding site. 5 helical membrane-spanning segments follow: residues 415–435 (FHYT…IFWY), 451–471 (CFWF…ILGL), 493–513 (ISTI…VSIV), 587–604 (PVGF…FFLI), and 608–627 (VIPA…YRSF). H416 is a binding site for Fe(II)-heme a.

The protein belongs to the heme-copper respiratory oxidase family. The cofactor is Cu cation. It depends on ferriheme a as a cofactor. Requires Heme A3. as cofactor.

It is found in the cell membrane. The enzyme catalyses 2 a quinol + O2 = 2 a quinone + 2 H2O. It participates in energy metabolism; oxidative phosphorylation. In terms of biological role, catalyzes quinol oxidation with the concomitant reduction of oxygen to water. This chain is Probable quinol oxidase subunit 1 (qoxB), found in Staphylococcus aureus (strain MRSA252).